Reading from the N-terminus, the 508-residue chain is Photosystem II CP47 reaction center protein (508 aa).

6 consecutive transmembrane segments (helical) span residues 21–36 (SVHIMHTALVAGWAGS), 101–115 (IVFSGLCFLAAIWHW), 140–156 (GIHLFLSGVACFGFGAF), 203–218 (IAAGTLGILAGLFHLS), 237–252 (VLSSSIAAVFFAAFVV), and 457–472 (SFALLFFFGHIWHGAR).

The protein belongs to the PsbB/PsbC family. PsbB subfamily. As to quaternary structure, PSII is composed of 1 copy each of membrane proteins PsbA, PsbB, PsbC, PsbD, PsbE, PsbF, PsbH, PsbI, PsbJ, PsbK, PsbL, PsbM, PsbT, PsbX, PsbY, PsbZ, Psb30/Ycf12, at least 3 peripheral proteins of the oxygen-evolving complex and a large number of cofactors. It forms dimeric complexes. Binds multiple chlorophylls. PSII binds additional chlorophylls, carotenoids and specific lipids. serves as cofactor.

Its subcellular location is the plastid. The protein localises to the chloroplast thylakoid membrane. In terms of biological role, one of the components of the core complex of photosystem II (PSII). It binds chlorophyll and helps catalyze the primary light-induced photochemical processes of PSII. PSII is a light-driven water:plastoquinone oxidoreductase, using light energy to abstract electrons from H(2)O, generating O(2) and a proton gradient subsequently used for ATP formation. The polypeptide is Photosystem II CP47 reaction center protein (Eucalyptus globulus subsp. globulus (Tasmanian blue gum)).